A 583-amino-acid chain; its full sequence is Protein NRT1/ PTR FAMILY 5.1 (583 aa).

A helical membrane pass occupies residues 74–94 (WSGAVWITPIAGAYIADSYIG). Thr-98 is subject to Phosphothreonine. 10 consecutive transmembrane segments (helical) span residues 99–119 (FTAS…AVTV), 134–154 (ASSL…IGAG), 182–202 (FFNW…LGLV), 210–230 (WGLG…VFYI), 320–340 (VLGL…WAQV), 361–381 (IPAA…VPMY), 405–425 (LGVG…VEVK), 446–466 (IFWL…NAIG), 485–505 (TFFT…VTMI), and 529–549 (YYYG…VWAA).

Belongs to the major facilitator superfamily. Proton-dependent oligopeptide transporter (POT/PTR) (TC 2.A.17) family. In terms of tissue distribution, expressed in flowers. Detected in stems, leaves and siliques.

It is found in the membrane. The sequence is that of Protein NRT1/ PTR FAMILY 5.1 (NPF5.1) from Arabidopsis thaliana (Mouse-ear cress).